A 703-amino-acid chain; its full sequence is Phosphate acetyltransferase (703 aa).

The phosphate acetyltransferase stretch occupies residues 377–703 (AFRYELIQKA…IQATQAREGA (327 aa)).

The protein in the N-terminal section; belongs to the CobB/CobQ family. In the C-terminal section; belongs to the phosphate acetyltransferase and butyryltransferase family.

It is found in the cytoplasm. The enzyme catalyses acetyl-CoA + phosphate = acetyl phosphate + CoA. It participates in metabolic intermediate biosynthesis; acetyl-CoA biosynthesis; acetyl-CoA from acetate: step 2/2. Involved in acetate metabolism. The polypeptide is Phosphate acetyltransferase (pta) (Deinococcus geothermalis (strain DSM 11300 / CIP 105573 / AG-3a)).